We begin with the raw amino-acid sequence, 483 residues long: Zinc metalloproteinase/disintegrin (483 aa).

The N-terminal stretch at 1–20 is a signal peptide; it reads MIQVLLVTVCLAVFPYQGSS. Residues 21 to 190 constitute a propeptide that is removed on maturation; it reads IILESGNVND…KASQLYLTPE (170 aa). In terms of domain architecture, Peptidase M12B spans 197–395; sequence RYVKLAIVVD…YKPQCILNAP (199 aa). 3 disulfides stabilise this stretch: Cys308/Cys390, Cys352/Cys374, and Cys354/Cys357. His333 is a Zn(2+) binding site. Glu334 is an active-site residue. Zn(2+)-binding residues include His337 and His343. Residues 396-411 constitute a propeptide that is removed on maturation; that stretch reads LRTDTVSTPVSGNELL. The Disintegrin domain occupies 403-483; that stretch reads TPVSGNELLE…SDDCPRWNDL (81 aa). 6 cysteine pairs are disulfide-bonded: Cys417/Cys432, Cys419/Cys427, Cys426/Cys449, Cys440/Cys446, Cys445/Cys470, and Cys458/Cys477. Positions 462 to 464 match the Cell attachment site motif; the sequence is RGD.

The protein belongs to the venom metalloproteinase (M12B) family. P-II subfamily. P-IIa sub-subfamily. As to quaternary structure, monomer. The cofactor is Zn(2+). Expressed by the venom gland.

Its subcellular location is the secreted. Its function is as follows. Impairs hemostasis in the envenomed animal. In terms of biological role, inhibits ADP- and collagen-induced human platelet aggregation with IC(50) of 123 and 135 nM, respectively. Inhibits sperm-egg binding in a concentration-dependent manner, but has no effect on the fusion of sperm-egg. This Protobothrops jerdonii (Jerdon's pitviper) protein is Zinc metalloproteinase/disintegrin.